Here is a 491-residue protein sequence, read N- to C-terminus: GTPase Der (491 aa).

Residues 3–178 (AKIALVGRPN…EMRDLLPEED (176 aa)) form the EngA-type G 1 domain. GTP-binding positions include 9–16 (GRPNVGKS), 57–61 (DTGGI), and 130–133 (NKVD). A compositionally biased stretch (acidic residues) spans 198-224 (DAETEDGASASETEEDITEETVEDEPE). Residues 198-225 (DAETEDGASASETEEDITEETVEDEPEA) form a disordered region. The 174-residue stretch at 227–400 (LRLCMLGRPN…LAARIRRECS (174 aa)) folds into the EngA-type G 2 domain. Residues 233-240 (GRPNAGKS), 280-284 (DTAGV), and 345-348 (NKMD) contribute to the GTP site. Residues 401-485 (VRIPTGQLNR…PMRVHFRSSH (85 aa)) enclose the KH-like domain.

Belongs to the TRAFAC class TrmE-Era-EngA-EngB-Septin-like GTPase superfamily. EngA (Der) GTPase family. As to quaternary structure, associates with the 50S ribosomal subunit.

GTPase that plays an essential role in the late steps of ribosome biogenesis. In Nitratidesulfovibrio vulgaris (strain ATCC 29579 / DSM 644 / CCUG 34227 / NCIMB 8303 / VKM B-1760 / Hildenborough) (Desulfovibrio vulgaris), this protein is GTPase Der.